A 254-amino-acid chain; its full sequence is MNFVQENNHVLYIWNGAISGEIEQEVNRLKAIPNVQVNVENADRVLLAGYTPSQFDVVLANVPSGNSEMASSLLKLVKPKGKVVFKDDSANAEATRSNLLLSGFINITSLDGNVFVGEKPNYEIGSAAKLSLGGNKAKVAAVWKLDVDDDDDERIDEDELLDEEDKVKPTAESLRVCGTTGKRKACKDCSCGLAEELEAETKGSAVANSEPKSSCGSCYLGDAFRCATCPYLGMPAFKPGEKIQLTDTQMRADI.

The tract at residues 4–132 is N-terminal SAM-like domain; it reads VQENNHVLYI…EIGSAAKLSL (129 aa). Positions 132-167 are linker; sequence LGGNKAKVAAVWKLDVDDDDDERIDEDELLDEEDKV. Residues Cys177, Cys186, Cys189, and Cys191 each coordinate [2Fe-2S] cluster. Positions 177 to 191 are fe-S binding site A; sequence CGTTGKRKACKDCSC. 4 residues coordinate [4Fe-4S] cluster: Cys215, Cys218, Cys226, and Cys229. Short sequence motifs (cx2C motif) lie at residues 215-218 and 226-229; these read CGSC and CATC. Residues 215-229 form a fe-S binding site B region; it reads CGSCYLGDAFRCATC.

Belongs to the anamorsin family. In terms of assembly, monomer. [2Fe-2S] cluster serves as cofactor. The cofactor is [4Fe-4S] cluster.

Its subcellular location is the cytoplasm. The protein localises to the mitochondrion intermembrane space. Its function is as follows. Component of the cytosolic iron-sulfur (Fe-S) protein assembly (CIA) machinery. Required for the maturation of extramitochondrial Fe-S proteins. Part of an electron transfer chain functioning in an early step of cytosolic Fe-S biogenesis, facilitating the de novo assembly of a [4Fe-4S] cluster on the cytosolic Fe-S scaffold complex. Electrons are transferred from NADPH via a FAD- and FMN-containing diflavin oxidoreductase. Together with the diflavin oxidoreductase, also required for the assembly of the diferric tyrosyl radical cofactor of ribonucleotide reductase (RNR), probably by providing electrons for reduction during radical cofactor maturation in the catalytic small subunit. This is Anamorsin homolog from Aedes aegypti (Yellowfever mosquito).